The following is a 131-amino-acid chain: MSWQSYVDDHLMCEVEGNHLTHAAIFGQDGSVWAQSSAFPQLKPAEIAGINKDFEEAGHLAPTGLFLGGEKYMVVQGEAGAVIRGKKGPGGVTIKKTTQALVFGIYDEPMTGGQCNLVVERLGDYLIESGL.

Belongs to the profilin family. As to quaternary structure, occurs in many kinds of cells as a complex with monomeric actin in a 1:1 ratio. As to expression, expressed in vascular bundles of roots, hypocotyls, cotyledons, leaves, sepals, petals, stamen filaments and stalks of developing seeds. Expressed in leaf epidermal cells, trichomes and stem epidermal cells. Detected in phloem exudates (at protein level).

Its subcellular location is the cytoplasm. It localises to the cytoskeleton. The protein localises to the endoplasmic reticulum. It is found in the cytosol. The protein resides in the nucleus. Binds to actin monomers and regulates the organization of the actin cytoskeleton. At high concentrations, profilin prevents the polymerization of actin, whereas it enhances it at low concentrations. At low concentrations, associates with the poly-proline motif of formins to enhance actin filament elongation rate. Binds G-actin and poly-L-proline with low affinity in vitro. Binds ACT1, ACT7 and ACT11 and inhibits actin polymerization. May be involved in the cross-talk between vesicular trafficking and the actin cytoskeleton. Inhibits cell growth of various pathogenic fungal strains. May play a role as antifungal proteins in the defense system against fungal pathogen attacks. The chain is Profilin-2 from Arabidopsis thaliana (Mouse-ear cress).